Consider the following 1098-residue polypeptide: Early transcription factor large subunit homolog (1098 aa).

One can recognise a Helicase ATP-binding domain in the interval 17–317 (KGGRAFFPCD…PNGQPLQRQQ (301 aa)). An ATP-binding site is contributed by 64 to 71 (WQTGTGKS). The short motif at 246–249 (DEIH) is the DEAH box element. One can recognise a Helicase C-terminal domain in the interval 489 to 689 (MMKDILSIIR…EGDKALRKHA (201 aa)).

This sequence belongs to the DEAD box helicase family. DEAH subfamily.

The protein localises to the virion. The enzyme catalyses ATP + H2O = ADP + phosphate + H(+). In terms of biological role, putative initation factor. This African swine fever virus (isolate Tick/Malawi/Lil 20-1/1983) (ASFV) protein is Early transcription factor large subunit homolog.